Consider the following 337-residue polypeptide: WAT1-related protein At1g11460 (337 aa).

A run of 10 helical transmembrane segments spans residues 14-34 (WPPI…NALV), 46-66 (IIGA…AYIL), 83-103 (FISG…GLSY), 107-127 (TVAC…ALIL), 139-159 (AGMI…FLTF), 188-208 (WLLG…WILF), 220-240 (FSST…LSLY), 254-274 (FVIG…TVSV), 284-304 (VFVS…DFII), and 309-329 (LYLG…VFLW). The region spanning 27–157 (MGSVNALVKK…IICISGALFL (131 aa)) is the EamA 1 domain. The region spanning 220–328 (FSSTCLMSIF…GTITGLYVFL (109 aa)) is the EamA 2 domain.

This sequence belongs to the drug/metabolite transporter (DMT) superfamily. Plant drug/metabolite exporter (P-DME) (TC 2.A.7.4) family.

It localises to the membrane. This chain is WAT1-related protein At1g11460, found in Arabidopsis thaliana (Mouse-ear cress).